We begin with the raw amino-acid sequence, 83 residues long: MSRAIWKGPFIDPFFFRKNGSSNSNNKIYSRRSVVSPKFIGREVEIYNGHKWITIKIKEDMIGHKFGEFAFTRKATIHKKKTK.

This sequence belongs to the universal ribosomal protein uS19 family.

It is found in the mitochondrion. The sequence is that of Small ribosomal subunit protein uS19m (RPS19) from Tetraselmis subcordiformis (Marine green alga).